Consider the following 445-residue polypeptide: Chromosomal replication initiator protein DnaA (445 aa).

Residues 1–73 (MSTHLTETWE…VNALKLLTSK (73 aa)) form a domain I, interacts with DnaA modulators region. Residues 73–106 (KKYNIDFIVTTEEKIEKNHNNEKSNIVVNDEMST) form a domain II region. The tract at residues 107–323 (MLNPKYTFDS…GALIRIVAFS (217 aa)) is domain III, AAA+ region. The ATP site is built by G151, G153, K154, and T155. The interval 324 to 445 (SLTNKEISVD…NDLNKRINQK (122 aa)) is domain IV, binds dsDNA.

Belongs to the DnaA family. Oligomerizes as a right-handed, spiral filament on DNA at oriC.

It localises to the cytoplasm. Functionally, plays an essential role in the initiation and regulation of chromosomal replication. ATP-DnaA binds to the origin of replication (oriC) to initiate formation of the DNA replication initiation complex once per cell cycle. Binds the DnaA box (a 9 base pair repeat at the origin) and separates the double-stranded (ds)DNA. Forms a right-handed helical filament on oriC DNA; dsDNA binds to the exterior of the filament while single-stranded (ss)DNA is stabiized in the filament's interior. The ATP-DnaA-oriC complex binds and stabilizes one strand of the AT-rich DNA unwinding element (DUE), permitting loading of DNA polymerase. After initiation quickly degrades to an ADP-DnaA complex that is not apt for DNA replication. Binds acidic phospholipids. The chain is Chromosomal replication initiator protein DnaA from Clostridium botulinum (strain Loch Maree / Type A3).